The primary structure comprises 66 residues: Conotoxin Lt3.5 (66 aa).

A signal peptide spans 1–20 (MMSKLGALLTICLLLFPLTA). Positions 21–53 (VPLDGDQPLDRHAERMHDGISPKRHPWFDPVKR) are excised as a propeptide. 3 disulfide bridges follow: cysteine 54–cysteine 66, cysteine 55–cysteine 62, and cysteine 59–cysteine 65. 4-hydroxyproline is present on proline 64.

It belongs to the conotoxin M superfamily. Expressed by the venom duct.

The protein resides in the secreted. This Conus litteratus (Lettered cone) protein is Conotoxin Lt3.5.